Reading from the N-terminus, the 245-residue chain is Probable phosphatase YcdX (245 aa).

Zn(2+) is bound by residues histidine 7, histidine 9, histidine 15, histidine 40, glutamate 73, histidine 101, histidine 131, aspartate 192, and histidine 194.

Belongs to the PHP family. Homotrimer. Zn(2+) is required as a cofactor.

The chain is Probable phosphatase YcdX from Shigella flexneri serotype 5b (strain 8401).